The following is a 119-amino-acid chain: Holo-[acyl-carrier-protein] synthase (119 aa).

Mg(2+)-binding residues include D7 and E53.

This sequence belongs to the P-Pant transferase superfamily. AcpS family. Mg(2+) serves as cofactor.

Its subcellular location is the cytoplasm. It carries out the reaction apo-[ACP] + CoA = holo-[ACP] + adenosine 3',5'-bisphosphate + H(+). Functionally, transfers the 4'-phosphopantetheine moiety from coenzyme A to a Ser of acyl-carrier-protein. The sequence is that of Holo-[acyl-carrier-protein] synthase from Dehalococcoides mccartyi (strain ATCC BAA-2266 / KCTC 15142 / 195) (Dehalococcoides ethenogenes (strain 195)).